Consider the following 1068-residue polypeptide: Phosphatidylinositol 4,5-bisphosphate 3-kinase catalytic subunit alpha isoform (1068 aa).

Residues Met-16–Val-105 enclose the PI3K-ABD domain. Residues Lys-187–Ala-289 form the PI3K-RBD domain. A C2 PI3K-type domain is found at Ile-330–Pro-487. The 178-residue stretch at Leu-517–Ala-694 folds into the PIK helical domain. Positions Arg-765–Trp-1051 constitute a PI3K/PI4K catalytic domain. A G-loop region spans residues Ile-771–Arg-777. The interval Gly-912–Asn-920 is catalytic loop. Residues His-931 to Thr-957 are activation loop.

Belongs to the PI3/PI4-kinase family. Heterodimer of a catalytic subunit PIK3CA and a p85 regulatory subunit (PIK3R1, PIK3R2 or PIK3R3). Interacts with IRS1 in nuclear extracts. Interacts with RUFY3. Interacts with RASD2. Interacts with APPL1. Interacts with HRAS and KRAS. Interaction with HRAS/KRAS is required for PI3K pathway signaling and cell proliferation stimulated by EGF and FGF2. Interacts with FAM83B; activates the PI3K/AKT signaling cascade.

It carries out the reaction a 1,2-diacyl-sn-glycero-3-phospho-(1D-myo-inositol-4,5-bisphosphate) + ATP = a 1,2-diacyl-sn-glycero-3-phospho-(1D-myo-inositol-3,4,5-trisphosphate) + ADP + H(+). It catalyses the reaction a 1,2-diacyl-sn-glycero-3-phospho-(1D-myo-inositol) + ATP = a 1,2-diacyl-sn-glycero-3-phospho-(1D-myo-inositol-3-phosphate) + ADP + H(+). The enzyme catalyses L-seryl-[protein] + ATP = O-phospho-L-seryl-[protein] + ADP + H(+). The catalysed reaction is 1,2-dioctanoyl-sn-glycero-3-phospho-(1D-myo-inositol-4,5-bisphosphate) + ATP = 1,2-dioctanoyl-sn-glycero-3-phospho-(1D-myo-inositol-3,4,5-trisphosphate) + ADP + H(+). It carries out the reaction 1-octadecanoyl-2-(5Z,8Z,11Z,14Z)-eicosatetraenoyl-sn-glycero-3-phospho-1D-myo-inositol 4,5-bisphosphate + ATP = 1-octadecanoyl-2-(5Z,8Z,11Z,14Z-eicosatetraenoyl)-sn-glycero-3-phospho-(1D-myo-inositol 3,4,5-triphosphate) + ADP + H(+). It functions in the pathway phospholipid metabolism; phosphatidylinositol phosphate biosynthesis. Functionally, phosphoinositide-3-kinase (PI3K) phosphorylates phosphatidylinositol (PI) and its phosphorylated derivatives at position 3 of the inositol ring to produce 3-phosphoinositides. Uses ATP and PtdIns(4,5)P2 (phosphatidylinositol 4,5-bisphosphate) to generate phosphatidylinositol 3,4,5-trisphosphate (PIP3). PIP3 plays a key role by recruiting PH domain-containing proteins to the membrane, including AKT1 and PDPK1, activating signaling cascades involved in cell growth, survival, proliferation, motility and morphology. Participates in cellular signaling in response to various growth factors. Involved in the activation of AKT1 upon stimulation by receptor tyrosine kinases ligands such as EGF, insulin, IGF1, VEGFA and PDGF. Involved in signaling via insulin-receptor substrate (IRS) proteins. Essential in endothelial cell migration during vascular development through VEGFA signaling, possibly by regulating RhoA activity. Required for lymphatic vasculature development, possibly by binding to RAS and by activation by EGF and FGF2, but not by PDGF. Regulates invadopodia formation through the PDPK1-AKT1 pathway. Participates in cardiomyogenesis in embryonic stem cells through a AKT1 pathway. Participates in vasculogenesis in embryonic stem cells through PDK1 and protein kinase C pathway. In addition to its lipid kinase activity, it displays a serine-protein kinase activity that results in the autophosphorylation of the p85alpha regulatory subunit as well as phosphorylation of other proteins such as 4EBP1, H-Ras, the IL-3 beta c receptor and possibly others. Plays a role in the positive regulation of phagocytosis and pinocytosis. The sequence is that of Phosphatidylinositol 4,5-bisphosphate 3-kinase catalytic subunit alpha isoform (PIK3CA) from Homo sapiens (Human).